A 66-amino-acid polypeptide reads, in one-letter code: uncharacterized protein (66 aa).

Belongs to the YeeT/YkfH/YpjJ family.

This is an uncharacterized protein from Escherichia coli (strain K12).